Consider the following 111-residue polypeptide: X antigen family member 2 (111 aa).

2 disordered regions span residues 1–61 (MSWR…AAEI) and 77–111 (KTGD…KSQV). Positions 86 to 111 (TDVKGKILPKAEHFKMPEAGEGKSQV) are enriched in basic and acidic residues.

The protein belongs to the GAGE family.

This Homo sapiens (Human) protein is X antigen family member 2 (XAGE2).